We begin with the raw amino-acid sequence, 242 residues long: MSGFFITATDTEVGKTVVAGALAGVFRELGYNIGVYKPLQSGHVASNPEGDAARLKVLSGVPTKEDEICPYSIEEPLAPRLAMKRAGRAVTLKDIIHHYNERLKEFNSLFVEGAGGLAVPYTEDALVIDFAKELQLPLIVVARPTLGTVNHTVLTIAYAKAHGLTVAGVILSGCKECEMERVQENKVMIEELSGVPVLGLLPFFEGEFTKKEVLESAKEYIMISKLEEFIRNESTVAHTSSN.

12 to 17 (EVGKTV) serves as a coordination point for ATP. T16 is a Mg(2+) binding site. K37 is a catalytic residue. Position 41 (S41) interacts with substrate. Residues D51 and 112–115 (EGAG) each bind ATP. Mg(2+) is bound by residues D51 and E112.

The protein belongs to the dethiobiotin synthetase family. In terms of assembly, homodimer. Mg(2+) serves as cofactor.

The protein resides in the cytoplasm. The enzyme catalyses (7R,8S)-7,8-diammoniononanoate + CO2 + ATP = (4R,5S)-dethiobiotin + ADP + phosphate + 3 H(+). The protein operates within cofactor biosynthesis; biotin biosynthesis; biotin from 7,8-diaminononanoate: step 1/2. Its function is as follows. Catalyzes a mechanistically unusual reaction, the ATP-dependent insertion of CO2 between the N7 and N8 nitrogen atoms of 7,8-diaminopelargonic acid (DAPA, also called 7,8-diammoniononanoate) to form a ureido ring. This is ATP-dependent dethiobiotin synthetase BioD from Bacillus thuringiensis (strain Al Hakam).